A 685-amino-acid chain; its full sequence is uncharacterized protein (685 aa).

Disordered regions lie at residues 502-538 and 635-685; these read NLNQ…SLNK and RSKR…IHNA. Positions 518–538 are enriched in polar residues; sequence SSENMTKFPSSRGKSTVSLNK. Residues 675–685 show a composition bias toward basic residues; the sequence is KLKKSLIIHNA.

This is an uncharacterized protein from Homo sapiens (Human).